The following is a 250-amino-acid chain: Kv channel-interacting protein 4 (250 aa).

Residues 2–44 (NVRRVESISAQLEEASSTGGFLYTQNSTKRSIKERLMKLLPCS) form a KIS region. Residues Ser-17 and Ser-56 each carry the phosphoserine modification. The 57-residue stretch at 61–117 (LEMATVRHRPEALELLEAQSKFTKKELQILYRGFKNECPSGVVNEDTFKEIYSQFFP) folds into the EF-hand 1; degenerate domain. EF-hand domains follow at residues 120 to 155 (DSTTYAHFLFNAFDTDHNGAVSFEDFIKGLSILLRG), 156 to 191 (TVQEKLNWAFNLYDINKDGYITKEEMLDIMKAIYDM), and 204 to 239 (APRQHVETFFQKMDKNKDGVVTIDEFIESCQKDENI). 13 residues coordinate Ca(2+): Asp-133, Asp-135, Asn-137, Asp-144, Asp-169, Asn-171, Asp-173, Tyr-175, Glu-180, Asp-217, Asn-219, Asp-221, and Glu-228. The interval 237–250 (ENIMRSMQLFENVI) is interaction with KCND2.

Belongs to the recoverin family. As to quaternary structure, component of heteromultimeric potassium channels. Identified in potassium channel complexes containing KCND1, KCND2, KCND3, KCNIP1, KCNIP2, KCNIP3, KCNIP4, DPP6 and DPP10. Interacts with KCND2. Interacts with KCND3. Interacts with the C-terminus of PSEN2 and probably PSEN1.

It localises to the cell membrane. The protein localises to the cytoplasm. It is found in the peroxisome. Regulatory subunit of Kv4/D (Shal)-type voltage-gated rapidly inactivating A-type potassium channels. Modulates KCND2 channel density, inactivation kinetics and rate of recovery from inactivation in a calcium-dependent and isoform-specific manner. Modulates KCND3/Kv4.3 currents. Isoform 4 does not increase KCND2 expression at the cell membrane. Isoform 4 retains KCND3 in the endoplasmic reticulum and negatively regulates its expression at the cell membrane. This chain is Kv channel-interacting protein 4 (KCNIP4), found in Bos taurus (Bovine).